Consider the following 254-residue polypeptide: Type III pantothenate kinase (254 aa).

6 to 13 (DVGNTNIV) is a binding site for ATP. 107–110 (GADR) serves as a coordination point for substrate. The Proton acceptor role is filled by D109. D129 serves as a coordination point for K(+). T132 lines the ATP pocket. T184 is a binding site for substrate.

The protein belongs to the type III pantothenate kinase family. As to quaternary structure, homodimer. NH4(+) is required as a cofactor. K(+) serves as cofactor.

It localises to the cytoplasm. The enzyme catalyses (R)-pantothenate + ATP = (R)-4'-phosphopantothenate + ADP + H(+). The protein operates within cofactor biosynthesis; coenzyme A biosynthesis; CoA from (R)-pantothenate: step 1/5. Its function is as follows. Catalyzes the phosphorylation of pantothenate (Pan), the first step in CoA biosynthesis. This chain is Type III pantothenate kinase, found in Exiguobacterium sp. (strain ATCC BAA-1283 / AT1b).